The sequence spans 429 residues: Adenylosuccinate synthetase (429 aa).

GTP-binding positions include 12–18 and 40–42; these read GDEGKGK and GHT. The active-site Proton acceptor is D13. 2 residues coordinate Mg(2+): D13 and G40. Residues 13 to 16, 38 to 41, T129, R143, Q223, T238, and R302 contribute to the IMP site; these read DEGK and NAGH. Catalysis depends on H41, which acts as the Proton donor. Position 298 to 304 (298 to 304) interacts with substrate; the sequence is TVTGRKR. GTP-binding positions include R304, 330-332, and 412-414; these read KLD and STS.

It belongs to the adenylosuccinate synthetase family. In terms of assembly, homodimer. Requires Mg(2+) as cofactor.

It is found in the cytoplasm. It catalyses the reaction IMP + L-aspartate + GTP = N(6)-(1,2-dicarboxyethyl)-AMP + GDP + phosphate + 2 H(+). Its pathway is purine metabolism; AMP biosynthesis via de novo pathway; AMP from IMP: step 1/2. Plays an important role in the de novo pathway of purine nucleotide biosynthesis. Catalyzes the first committed step in the biosynthesis of AMP from IMP. The protein is Adenylosuccinate synthetase of Novosphingobium aromaticivorans (strain ATCC 700278 / DSM 12444 / CCUG 56034 / CIP 105152 / NBRC 16084 / F199).